The sequence spans 455 residues: Probable ATP-dependent RNA helicase DDX47 (455 aa).

Over residues 1-10 (MAAPEEHDSP) the composition is skewed to basic and acidic residues. The disordered stretch occupies residues 1–20 (MAAPEEHDSPTEASQPIVEE). Residue A2 is modified to N-acetylalanine. Position 9 is a phosphoserine (S9). A Q motif motif is present at residues 24 to 52 (KTFKDLGVTDVLCEACDQLGWTKPTKIQI). A Helicase ATP-binding domain is found at 55 to 226 (IPLALQGRDI…RAALKNPVKC (172 aa)). 68 to 75 (AETGSGKT) contributes to the ATP binding site. T149 carries the phosphothreonine modification. The DEAD box signature appears at 174–177 (DEAD). In terms of domain architecture, Helicase C-terminal spans 237-397 (KLQQYYIFIP…GFPTQDDEVM (161 aa)). Residues 413-428 (ELREHGEKKKRSREDA) are compositionally biased toward basic and acidic residues. Residues 413-455 (ELREHGEKKKRSREDAGDNDDTEGAIGVRNKVAGGKMKKRKGR) are disordered. Residue S424 is modified to Phosphoserine.

This sequence belongs to the DEAD box helicase family. DDX47/RRP3 subfamily. In terms of assembly, interacts with AGO1 and AGO2. Interacts with GABARAP. Interacts with NOL8; the interaction is RNA-dependent. In terms of tissue distribution, expressed in skin, lung and breast. Also expressed in the brain.

It is found in the nucleus. Its subcellular location is the nucleolus. It catalyses the reaction ATP + H2O = ADP + phosphate + H(+). Required for efficient ribosome biogenesis. May have a role in mRNA splicing. Involved in apoptosis. This chain is Probable ATP-dependent RNA helicase DDX47 (DDX47), found in Homo sapiens (Human).